Consider the following 604-residue polypeptide: Polycomb group protein EMF2B (604 aa).

Residues 310–331 (CPFCLVPCGSFKGLGCHLNASH) form a C2H2-type zinc finger. The tract at residues 396–440 (PHIVDSGSPEDAQAGSEDDYVQRENGSSVAHASVDPANSLHGSNL) is disordered. The tract at residues 454-589 (LSVERADPRN…DARAMNACNT (136 aa)) is VEFS-box.

Belongs to the VEFS (VRN2-EMF2-FIS2-SU(Z)12) family. As to quaternary structure, component of the polycomb repressive complex 2 (PRC2), composed of the core PRC2 components FIE2, EZ1 and CLF. PRC2 methylates 'Lys-27' residues of histone H3 (H3K27me3), leading to transcriptional repression of the affected target gene. In terms of tissue distribution, widely expressed.

Polycomb group (PcG) protein. PcG proteins act by forming multiprotein complexes, which are required to maintain the transcriptionally repressive state of homeotic genes throughout development. PcG proteins are not required to initiate repression, but to maintain it during later stages of development. They act via the methylation of histones, rendering chromatin heritably changed in its expressibility. Polycomb group (PcG) protein involved in the repression of flowering under long day (LD) conditions. Regulates floret development. The sequence is that of Polycomb group protein EMF2B from Oryza sativa subsp. japonica (Rice).